The primary structure comprises 303 residues: Zinc transporter ZIP9 (303 aa).

Residues 7-27 form a helical membrane-spanning segment; it reads ISLLSLAMLVGCYVSGIIPLA. An N-linked (GlcNAc...) asparagine glycan is attached at asparagine 29. Transmembrane regions (helical) follow at residues 35–55, 102–122, 142–162, 172–192, and 206–226; these read LKLV…AVIV, AYIG…DQIG, ITTT…LGAA, LIVF…LVSF, and HLLV…LGLS. N-linked (GlcNAc...) asparagine glycosylation is present at asparagine 237. The next 2 helical transmembrane spans lie at 240 to 260 and 282 to 302; these read GVAM…HVLP and LEVC…IGHQ.

Belongs to the ZIP transporter (TC 2.A.5) family.

It is found in the golgi apparatus. Its subcellular location is the trans-Golgi network membrane. The protein localises to the cell membrane. It localises to the cytoplasm. The protein resides in the perinuclear region. It is found in the mitochondrion. Its subcellular location is the nucleus. The enzyme catalyses Zn(2+)(in) = Zn(2+)(out). Its function is as follows. Transports zinc ions across cell and organelle membranes into the cytoplasm and regulates intracellular zinc homeostasis. Participates in the zinc ions efflux out of the secretory compartments. Also functions as a membrane androgen receptor that mediates, through a G protein, the non-classical androgen signaling pathway, characterized by the activation of MAPK3/MAPK1 (Erk1/2) and transcription factors CREB1 or ATF1. Moreover, has dual functions as a membrane-bound androgen receptor and as an androgen-dependent zinc transporter both of which are mediated through an inhibitory G protein (Gi) that mediates both MAP kinase and zinc signaling leading to the androgen-dependent apoptotic process. The chain is Zinc transporter ZIP9 from Xenopus tropicalis (Western clawed frog).